The following is a 1076-amino-acid chain: Nickel and cobalt resistance protein CnrA (1076 aa).

A run of 12 helical transmembrane segments spans residues 14 to 34, 366 to 386, 390 to 410, 418 to 438, 475 to 495, 502 to 522, 561 to 581, 903 to 923, 928 to 948, 959 to 979, 1003 to 1023, and 1035 to 1055; these read WLVL…LNLL, TVAK…FALL, RAAT…AIGM, NLMS…VIIV, PTVY…TFQG, SPMV…SLTF, PMPF…AFTF, RLAI…YMAI, LTAT…FALL, AVGF…LISA, RPVL…AIAT, and TVVI…LPAL.

Belongs to the resistance-nodulation-cell division (RND) (TC 2.A.6) family.

It is found in the cell inner membrane. Functionally, the products of the genes cnrA, cnrB, and cnrC are likely to form a membrane-bound protein complex catalyzing an energy-dependent efflux of Ni(2+) and Co(2+). The mechanism of action of the CnrCBA complex may be that of a proton/cation antiporter. The sequence is that of Nickel and cobalt resistance protein CnrA (cnrA) from Cupriavidus metallidurans (strain ATCC 43123 / DSM 2839 / NBRC 102507 / CH34) (Ralstonia metallidurans).